A 401-amino-acid chain; its full sequence is LysM domain-containing GPI-anchored protein LYP4 (401 aa).

Positions 1-23 (MPPPLLLLLLLAAAAAAVAPARS) are cleaved as a signal peptide. Disulfide bonds link Cys30–Cys96, Cys36–Cys162, Cys94–Cys160, and Cys96–Cys162. LysM domains are found at residues 106–156 (VRYV…TLFV) and 175–218 (LTYV…IIVV). Intrachain disulfides connect Cys223–Cys255 and Cys250–Cys279. Asn240 is a glycosylation site (N-linked (GlcNAc...) asparagine). N-linked (GlcNAc...) asparagine glycans are attached at residues Asn281, Asn288, and Asn310. A lipid anchor (GPI-anchor amidated serine) is attached at Ser373. Residues 374–401 (SGPPPAGRHVVGDVLGAFALCLVGNLLW) constitute a propeptide, removed in mature form.

As to quaternary structure, interacts with LYP6. Interacts with CEBIP. Interacts with CERK1. In terms of tissue distribution, expressed in roots and leaves.

It localises to the cell membrane. Its function is as follows. Functions in innate immunity. Functions as a pattern recognition receptor (PRR), sensing bacterial peptidoglycan (PGN) and fungal chitin at the cell surface. Involved in resistance against the bacterial pathogen Xanthomonas oryzae pv. oryzae (Xoo) and the fungal pathogen Magnaporthe oryzae. Binds PGN and fungal chitin in vitro. Involved in microbe-associated molecular patterns (MAMPs) perception and participates in the activation of defense genes against the bacterial pathogen Xanthomonas oryzae pv. oryzicola (Xoc) or the fungal pathogen Magnaporthe oryzae. The sequence is that of LysM domain-containing GPI-anchored protein LYP4 from Oryza sativa subsp. japonica (Rice).